The primary structure comprises 1288 residues: 5-oxoprolinase (1288 aa).

Position 151 is a phosphothreonine (T151). The disordered stretch occupies residues 1249 to 1269; it reads GGGGYGDPEDPAPLPGSPLQP. Position 1265 is a phosphoserine (S1265).

This sequence belongs to the oxoprolinase family. Homodimer. As to expression, expressed in coronary artery and kidney.

The protein localises to the cytoplasm. Its subcellular location is the cytosol. It catalyses the reaction 5-oxo-L-proline + ATP + 2 H2O = L-glutamate + ADP + phosphate + H(+). Functionally, catalyzes the cleavage of 5-oxo-L-proline to form L-glutamate coupled to the hydrolysis of ATP to ADP and inorganic phosphate. The polypeptide is 5-oxoprolinase (OPLAH) (Bos taurus (Bovine)).